Reading from the N-terminus, the 151-residue chain is Ribosome maturation factor RimP (151 aa).

The protein belongs to the RimP family.

It localises to the cytoplasm. In terms of biological role, required for maturation of 30S ribosomal subunits. The chain is Ribosome maturation factor RimP from Shewanella frigidimarina (strain NCIMB 400).